We begin with the raw amino-acid sequence, 471 residues long: Pachytene checkpoint protein 2 homolog (471 aa).

ATP is bound at residue 213 to 220; the sequence is GPPGTGKT.

This sequence belongs to the AAA ATPase family. PCH2 subfamily.

Its function is as follows. Plays a key role in chromosome recombination during meiosis. This is Pachytene checkpoint protein 2 homolog from Oryza sativa subsp. indica (Rice).